The following is a 316-amino-acid chain: DDRGK domain-containing protein 1 (316 aa).

Topologically, residues 1-3 are lumenal; that stretch reads MVE. Residues 4–24 form a helical membrane-spanning segment; sequence LDYLFLGSVGFLTIALMLIIL. Residues 25 to 316 are Cytoplasmic-facing; it reads RIIKLYFDEK…VEHVSELTAA (292 aa). The segment at 147–187 is disordered; sequence LEQEKEKRLQKEREKQMEQEEEERKRKCREREEREKREEEE.

Belongs to the DDRGK1 family.

The protein localises to the endoplasmic reticulum membrane. In terms of biological role, substrate adapter for ufmylation, the covalent attachment of the ubiquitin-like modifier UFM1 to substrate proteins. This Brugia malayi (Filarial nematode worm) protein is DDRGK domain-containing protein 1.